We begin with the raw amino-acid sequence, 183 residues long: ATP synthase subunit b, chloroplastic (183 aa).

A helical membrane pass occupies residues 20 to 42 (INTNVFETNIINLAIVVGTLFYY).

It belongs to the ATPase B chain family. In terms of assembly, F-type ATPases have 2 components, F(1) - the catalytic core - and F(0) - the membrane proton channel. F(1) has five subunits: alpha(3), beta(3), gamma(1), delta(1), epsilon(1). F(0) has four main subunits: a(1), b(1), b'(1) and c(10-14). The alpha and beta chains form an alternating ring which encloses part of the gamma chain. F(1) is attached to F(0) by a central stalk formed by the gamma and epsilon chains, while a peripheral stalk is formed by the delta, b and b' chains.

The protein resides in the plastid. It localises to the chloroplast thylakoid membrane. F(1)F(0) ATP synthase produces ATP from ADP in the presence of a proton or sodium gradient. F-type ATPases consist of two structural domains, F(1) containing the extramembraneous catalytic core and F(0) containing the membrane proton channel, linked together by a central stalk and a peripheral stalk. During catalysis, ATP synthesis in the catalytic domain of F(1) is coupled via a rotary mechanism of the central stalk subunits to proton translocation. In terms of biological role, component of the F(0) channel, it forms part of the peripheral stalk, linking F(1) to F(0). The sequence is that of ATP synthase subunit b, chloroplastic from Euglena gracilis.